Reading from the N-terminus, the 183-residue chain is Orotate phosphoribosyltransferase (183 aa).

Residues Arg-100, Lys-101, Lys-104, His-106, and 126–134 (EDVVTTGSS) each bind 5-phospho-alpha-D-ribose 1-diphosphate. The orotate site is built by Thr-130 and Arg-158.

The protein belongs to the purine/pyrimidine phosphoribosyltransferase family. PyrE subfamily. As to quaternary structure, homodimer. Mg(2+) serves as cofactor.

The catalysed reaction is orotidine 5'-phosphate + diphosphate = orotate + 5-phospho-alpha-D-ribose 1-diphosphate. The protein operates within pyrimidine metabolism; UMP biosynthesis via de novo pathway; UMP from orotate: step 1/2. Functionally, catalyzes the transfer of a ribosyl phosphate group from 5-phosphoribose 1-diphosphate to orotate, leading to the formation of orotidine monophosphate (OMP). This chain is Orotate phosphoribosyltransferase, found in Aquifex aeolicus (strain VF5).